Here is a 616-residue protein sequence, read N- to C-terminus: Dihydroxy-acid dehydratase (616 aa).

D81 contacts Mg(2+). C122 is a binding site for [2Fe-2S] cluster. 2 residues coordinate Mg(2+): D123 and K124. Residue K124 is modified to N6-carboxylysine. C195 is a binding site for [2Fe-2S] cluster. Residue E491 coordinates Mg(2+). S517 serves as the catalytic Proton acceptor.

Belongs to the IlvD/Edd family. Homodimer. The cofactor is [2Fe-2S] cluster. Mg(2+) is required as a cofactor.

The catalysed reaction is (2R)-2,3-dihydroxy-3-methylbutanoate = 3-methyl-2-oxobutanoate + H2O. The enzyme catalyses (2R,3R)-2,3-dihydroxy-3-methylpentanoate = (S)-3-methyl-2-oxopentanoate + H2O. It functions in the pathway amino-acid biosynthesis; L-isoleucine biosynthesis; L-isoleucine from 2-oxobutanoate: step 3/4. It participates in amino-acid biosynthesis; L-valine biosynthesis; L-valine from pyruvate: step 3/4. Functions in the biosynthesis of branched-chain amino acids. Catalyzes the dehydration of (2R,3R)-2,3-dihydroxy-3-methylpentanoate (2,3-dihydroxy-3-methylvalerate) into 2-oxo-3-methylpentanoate (2-oxo-3-methylvalerate) and of (2R)-2,3-dihydroxy-3-methylbutanoate (2,3-dihydroxyisovalerate) into 2-oxo-3-methylbutanoate (2-oxoisovalerate), the penultimate precursor to L-isoleucine and L-valine, respectively. The polypeptide is Dihydroxy-acid dehydratase (Escherichia coli O9:H4 (strain HS)).